The primary structure comprises 193 residues: CRIB domain-containing protein RIC5 (193 aa).

The 14-residue stretch at 29–42 (IGIPTDVKHVAHIG) folds into the CRIB domain. Positions 42 to 193 (GWEGPSATTP…CAGLGSSTGR (152 aa)) are disordered. The segment covering 55–67 (HDFKPTDQTKTET) has biased composition (basic and acidic residues). The span at 90–100 (STGNNSPTESP) shows a compositional bias: polar residues. Over residues 123–134 (GSGSESGSGLEL) the composition is skewed to low complexity.

In terms of assembly, interacts with ARAC11/ROP1. Expressed in flowers and pollen.

The protein localises to the cell membrane. Functionally, functions as a downstream effector of Rho-related GTP binding proteins of the 'Rho of Plants' (ROPs) family. Participates in the propagation of ROP GTPase signals in specific cellular responses. Is involved in pollen tube growth regulation through its interaction with ARAC11/ROP1. The protein is CRIB domain-containing protein RIC5 (RIC5) of Arabidopsis thaliana (Mouse-ear cress).